The sequence spans 331 residues: Anthranilate phosphoribosyltransferase (331 aa).

Residues Gly79, Gly82 to Asp83, Thr87, Asn89 to Thr92, Lys107 to Ser115, and Ala119 contribute to the 5-phospho-alpha-D-ribose 1-diphosphate site. Residue Gly79 coordinates anthranilate. Mg(2+) is bound at residue Ser91. Residue Asn110 coordinates anthranilate. An anthranilate-binding site is contributed by Arg165. Mg(2+) is bound by residues Asp223 and Glu224.

It belongs to the anthranilate phosphoribosyltransferase family. As to quaternary structure, homodimer. Requires Mg(2+) as cofactor.

It carries out the reaction N-(5-phospho-beta-D-ribosyl)anthranilate + diphosphate = 5-phospho-alpha-D-ribose 1-diphosphate + anthranilate. It participates in amino-acid biosynthesis; L-tryptophan biosynthesis; L-tryptophan from chorismate: step 2/5. In terms of biological role, catalyzes the transfer of the phosphoribosyl group of 5-phosphorylribose-1-pyrophosphate (PRPP) to anthranilate to yield N-(5'-phosphoribosyl)-anthranilate (PRA). This chain is Anthranilate phosphoribosyltransferase, found in Bacteroides fragilis (strain ATCC 25285 / DSM 2151 / CCUG 4856 / JCM 11019 / LMG 10263 / NCTC 9343 / Onslow / VPI 2553 / EN-2).